The following is a 513-amino-acid chain: GMP synthase [glutamine-hydrolyzing] (513 aa).

Residues 9-198 enclose the Glutamine amidotransferase type-1 domain; it reads LILVLDFGSQ…VRRVCNCTGE (190 aa). Catalysis depends on C86, which acts as the Nucleophile. Catalysis depends on residues H172 and E174. The GMPS ATP-PPase domain occupies 199 to 388; sequence WTMENFIEIE…LGIPEHLVWR (190 aa). Residue 226–232 participates in ATP binding; it reads SGGVDSS.

As to quaternary structure, homodimer.

The enzyme catalyses XMP + L-glutamine + ATP + H2O = GMP + L-glutamate + AMP + diphosphate + 2 H(+). The protein operates within purine metabolism; GMP biosynthesis; GMP from XMP (L-Gln route): step 1/1. Its function is as follows. Catalyzes the synthesis of GMP from XMP. The sequence is that of GMP synthase [glutamine-hydrolyzing] from Staphylococcus epidermidis (strain ATCC 35984 / DSM 28319 / BCRC 17069 / CCUG 31568 / BM 3577 / RP62A).